Here is a 299-residue protein sequence, read N- to C-terminus: CCR4-NOT transcription complex subunit 9 (299 aa).

Residue M1 is modified to N-acetylmethionine.

Belongs to the CNOT9 family. Homodimer. Component of the CCR4-NOT complex; distinct complexes seem to exist that differ in the participation of probably mutually exclusive catalytic subunits. Interacts with MYB, ATF2, RARA, RARB, RARG, RXRA, RXRB and RXRG. Identified in a complex with ATF2 bound to target DNA. Interacts with NANOS2. Directly interacts with ZNF335. In terms of tissue distribution, detected in spleen, thymus, prostate, testis, ovary and intestine.

The protein localises to the nucleus. The protein resides in the cytoplasm. It localises to the P-body. Functionally, component of the CCR4-NOT complex which is one of the major cellular mRNA deadenylases and is linked to various cellular processes including bulk mRNA degradation, miRNA-mediated repression, translational repression during translational initiation and general transcription regulation. Additional complex functions may be a consequence of its influence on mRNA expression. Involved in down-regulation of MYB- and JUN-dependent transcription. May play a role in cell differentiation. Can bind oligonucleotides, such as poly-G, poly-C or poly-T (in vitro), but the physiological relevance of this is not certain. Does not bind poly-A. Enhances ligand-dependent transcriptional activity of nuclear hormone receptors, including RARA, expect ESR1-mediated transcription that is not only slightly increased, if at all. The protein is CCR4-NOT transcription complex subunit 9 of Homo sapiens (Human).